A 331-amino-acid chain; its full sequence is Cytosolic sulfotransferase 1 (331 aa).

3'-phosphoadenylyl sulfate is bound at residue 74 to 79 (KSGTTW). Catalysis depends on histidine 143, which acts as the Proton acceptor. 3'-phosphoadenylyl sulfate is bound by residues arginine 165, serine 173, tyrosine 231, and 297–299 (RKG).

It belongs to the sulfotransferase 1 family.

The protein localises to the cytoplasm. In terms of biological role, sulfotransferase that utilizes 3'-phospho-5'-adenylyl sulfate (PAPS) as sulfonate donor. This is Cytosolic sulfotransferase 1 (SOT1) from Arabidopsis thaliana (Mouse-ear cress).